A 767-amino-acid chain; its full sequence is Cilium assembly protein DZIP1L (767 aa).

The interval 122 to 144 (QQRGQQELGRQADELKGVREESR) is disordered. Basic and acidic residues predominate over residues 131 to 144 (RQADELKGVREESR). The segment at 166–189 (HTCHLCDKTFMNATFLRGHIQRRH) adopts a C2H2-type zinc-finger fold. The stretch at 205–406 (VEEVLEELRA…SQEEMIQSLS (202 aa)) forms a coiled coil. Ser-426 carries the post-translational modification Phosphoserine. Positions 518-767 (SRAKERQENG…SSGQPRVPAW (250 aa)) are disordered. Composition is skewed to polar residues over residues 533-547 (PDGQPSVKSQQSTLV) and 574-588 (RQSHGSHGSSLTQVS). The segment covering 607-616 (GPGMSTPPFS) has biased composition (low complexity). Over residues 658 to 675 (ENAQPPGQGSGTLVQSMV) the composition is skewed to polar residues. Basic and acidic residues predominate over residues 677 to 686 (NLEKQLEAPA).

Belongs to the DZIP C2H2-type zinc-finger protein family. Interacts with SEPTIN2.

It localises to the cytoplasm. Its subcellular location is the cytoskeleton. The protein localises to the cilium basal body. The protein resides in the microtubule organizing center. It is found in the centrosome. It localises to the centriole. Involved in primary cilium formation. Probably acts as a transition zone protein required for localization of PKD1/PC1 and PKD2/PC2 to the ciliary membrane. The sequence is that of Cilium assembly protein DZIP1L from Homo sapiens (Human).